We begin with the raw amino-acid sequence, 107 residues long: Cell division protein FtsB (107 aa).

At 1 to 3 (MGK) the chain is on the cytoplasmic side. Residues 4 to 21 (LTLLLLILLGWLQYSLWL) form a helical membrane-spanning segment. The Periplasmic segment spans residues 22-107 (GKNGVHDFVR…IPSTQNNAQQ (86 aa)). The stretch at 39–62 (QEVNNGKLKARNDQLFAEIDDLNG) forms a coiled coil.

It belongs to the FtsB family. In terms of assembly, part of a complex composed of FtsB, FtsL and FtsQ.

Its subcellular location is the cell inner membrane. Functionally, essential cell division protein. May link together the upstream cell division proteins, which are predominantly cytoplasmic, with the downstream cell division proteins, which are predominantly periplasmic. The sequence is that of Cell division protein FtsB from Yersinia enterocolitica serotype O:8 / biotype 1B (strain NCTC 13174 / 8081).